The sequence spans 172 residues: Envelope protein UL45 (172 aa).

Over 1–27 (MPLRASEHAYRPLGPGTPPMRARLPAA) the chain is Intravirion. The helical; Signal-anchor for type II membrane protein transmembrane segment at 28–48 (AWVGVGTIIGGVVIIAALVLV) threads the bilayer. Topologically, residues 49-172 (PSRASWALSP…TSTRNALGLP (124 aa)) are virion surface.

It belongs to the herpesviridae HHV-1 UL45 family.

Its subcellular location is the virion membrane. Its function is as follows. Important virulence factor of HSV neurotropism. Seems to be required for glycoprotein B-induced fusion. Dispensable for growth in vitro. The polypeptide is Envelope protein UL45 (Human herpesvirus 1 (strain KOS) (HHV-1)).